The chain runs to 696 residues: Glycine--tRNA ligase beta subunit (696 aa).

It belongs to the class-II aminoacyl-tRNA synthetase family. As to quaternary structure, tetramer of two alpha and two beta subunits.

It localises to the cytoplasm. It carries out the reaction tRNA(Gly) + glycine + ATP = glycyl-tRNA(Gly) + AMP + diphosphate. The protein is Glycine--tRNA ligase beta subunit of Methylorubrum extorquens (strain CM4 / NCIMB 13688) (Methylobacterium extorquens).